The primary structure comprises 450 residues: TATA box-binding protein-associated factor RNA polymerase I subunit A (450 aa).

As to quaternary structure, component of the transcription factor SL1/TIF-IB complex, composed of TBP and at least TAF1A, TAF1B, TAF1C and TAF1D. In the complex interacts directly with TBP, TAF1A and TAF1B. Interaction of the SL1/TIF-IB subunits with TBP excludes interaction of TBP with the transcription factor IID (TFIID) subunits. Interacts with UBFT. Interacts with CEBPA (isoform 1 and isoform 4). Part of Pol I pre-initiation complex (PIC), in which Pol I core assembles with RRN3 and promoter-bound UTBF and SL1/TIF-IB complex.

Its subcellular location is the nucleus. The protein localises to the nucleolus. Functionally, component of the transcription factor SL1/TIF-IB complex, which is involved in the assembly of the PIC (pre-initiation complex) during RNA polymerase I-dependent transcription. The rate of PIC formation probably is primarily dependent on the rate of association of SL1/TIF-IB with the rDNA promoter. SL1/TIF-IB is involved in stabilization of nucleolar transcription factor 1/UBTF on rDNA. Formation of SL1/TIF-IB excludes the association of TBP with TFIID subunits. The chain is TATA box-binding protein-associated factor RNA polymerase I subunit A (TAF1A) from Homo sapiens (Human).